The sequence spans 226 residues: EEF1A lysine methyltransferase 3 (226 aa).

S-adenosyl-L-methionine is bound by residues Trp57, 83–85 (GAG), Asp104, Trp133, and Ala150.

The protein belongs to the methyltransferase superfamily. METTL21 family. Interacts with members of the heat shock protein 70 and 90 families and of the TCP-1 chaperonin family, as well as with HSPD1, STIP1 and tubulin; at least some of these proteins may be methylation substrates.

The protein resides in the cytoplasm. It localises to the cytoskeleton. The protein localises to the microtubule organizing center. Its subcellular location is the centrosome. It catalyses the reaction L-lysyl-[protein] + 3 S-adenosyl-L-methionine = N(6),N(6),N(6)-trimethyl-L-lysyl-[protein] + 3 S-adenosyl-L-homocysteine + 3 H(+). The enzyme catalyses L-lysyl-[protein] + S-adenosyl-L-methionine = N(6)-methyl-L-lysyl-[protein] + S-adenosyl-L-homocysteine + H(+). It carries out the reaction N(6)-methyl-L-lysyl-[protein] + S-adenosyl-L-methionine = N(6),N(6)-dimethyl-L-lysyl-[protein] + S-adenosyl-L-homocysteine + H(+). The catalysed reaction is N(6),N(6)-dimethyl-L-lysyl-[protein] + S-adenosyl-L-methionine = N(6),N(6),N(6)-trimethyl-L-lysyl-[protein] + S-adenosyl-L-homocysteine + H(+). In terms of biological role, protein-lysine methyltransferase that selectively mono-, di- and trimethylates 'Lys-165' of the translation elongation factors EEF1A1 and EEF1A2 in an aminoacyl-tRNA and GTP-dependent manner. EEF1A1 methylation by EEF1AKMT3 is dynamic as well as inducible by stress conditions, such as ER-stress, and plays a regulatory role on mRNA translation. In Bos taurus (Bovine), this protein is EEF1A lysine methyltransferase 3.